Here is a 339-residue protein sequence, read N- to C-terminus: Phosphate acyltransferase (339 aa).

It belongs to the PlsX family. In terms of assembly, homodimer. Probably interacts with PlsY.

Its subcellular location is the cytoplasm. It carries out the reaction a fatty acyl-[ACP] + phosphate = an acyl phosphate + holo-[ACP]. It functions in the pathway lipid metabolism; phospholipid metabolism. Catalyzes the reversible formation of acyl-phosphate (acyl-PO(4)) from acyl-[acyl-carrier-protein] (acyl-ACP). This enzyme utilizes acyl-ACP as fatty acyl donor, but not acyl-CoA. This is Phosphate acyltransferase from Vesicomyosocius okutanii subsp. Calyptogena okutanii (strain HA).